The sequence spans 70 residues: DNA-directed RNA polymerase subunit epsilon (70 aa).

It belongs to the RNA polymerase subunit epsilon family. RNAP is composed of a core of 2 alpha, a beta and a beta' subunit. The core is associated with a delta subunit, and at least one of epsilon or omega. When a sigma factor is associated with the core the holoenzyme is formed, which can initiate transcription.

It carries out the reaction RNA(n) + a ribonucleoside 5'-triphosphate = RNA(n+1) + diphosphate. Functionally, a non-essential component of RNA polymerase (RNAP). The polypeptide is DNA-directed RNA polymerase subunit epsilon (Bacillus cereus (strain ZK / E33L)).